A 1342-amino-acid chain; its full sequence is DNA-directed RNA polymerase subunit beta (1342 aa).

It belongs to the RNA polymerase beta chain family. As to quaternary structure, the RNAP catalytic core consists of 2 alpha, 1 beta, 1 beta' and 1 omega subunit. When a sigma factor is associated with the core the holoenzyme is formed, which can initiate transcription.

It catalyses the reaction RNA(n) + a ribonucleoside 5'-triphosphate = RNA(n+1) + diphosphate. Its function is as follows. DNA-dependent RNA polymerase catalyzes the transcription of DNA into RNA using the four ribonucleoside triphosphates as substrates. The polypeptide is DNA-directed RNA polymerase subunit beta (Vibrio parahaemolyticus serotype O3:K6 (strain RIMD 2210633)).